The following is a 260-amino-acid chain: CD27 antigen (260 aa).

The first 19 residues, 1-19 (MARPHPWWLCVLGTLVGLS), serve as a signal peptide directing secretion. The Extracellular segment spans residues 20 to 191 (ATPAPKSCPE…RSLCSSDFIR (172 aa)). 3 TNFR-Cys repeats span residues 26–63 (SCPERHYWAQGKLCCQMCEPGTFLVKDCDQHRKAAQCD), 64–104 (PCIP…NAEC), and 105–141 (ACRNGWQCRDKECTECDPLPNPSLTARSSQALSPHPQ). 8 disulfide bridges follow: C27–C39, C40–C53, C43–C62, C65–C81, C84–C96, C87–C104, C106–C120, and C112–C117. N95 is a glycosylation site (N-linked (GlcNAc...) asparagine). S127 carries O-linked (GalNAc...) serine glycosylation. A helical transmembrane segment spans residues 192-212 (ILVIFSGMFLVFTLAGALFLH). Over 213–260 (QRRKYRSNKGESPVEPAEPCHYSCPREEEGSTIPIQEDYRKPEPACSP) the chain is Cytoplasmic. A Phosphoserine modification is found at S219. Residues 219 to 260 (SNKGESPVEPAEPCHYSCPREEEGSTIPIQEDYRKPEPACSP) are disordered. A compositionally biased stretch (basic and acidic residues) spans 249 to 260 (EDYRKPEPACSP).

As to quaternary structure, homodimer. Interacts with SIVA1; may play a role in apoptosis through association with SIVA1. Interacts with TRAF2. Interacts ith PTPN6. Post-translationally, phosphorylated. N-glycosylated. In terms of processing, O-glycosylated with core 1 or possibly core 8 glycans. Found in most T-lymphocytes.

It localises to the cell membrane. Its function is as follows. Costimulatory immune-checkpoint receptor expressed at the surface of T-cells, NK-cells and B-cells which binds to and is activated by its ligand CD70/CD27L expressed by B-cells. The CD70-CD27 signaling pathway mediates antigen-specific T-cell activation and expansion which in turn provides immune surveillance of B-cells. Mechanistically, CD70 ligation activates the TRAF2-PTPN6 axis that subsequently inhibits LCK phosphorylation to promote phenotypic and transcriptional adaptations of T-cell memory. In addition, activation by CD70 on early progenitor cells provides a negative feedback signal to leukocyte differentiation during immune activation and thus modulates hematopoiesis. Negatively regulates the function of Th2 lymphocytes in the adipose tissue. This is CD27 antigen from Homo sapiens (Human).